The primary structure comprises 148 residues: Large ribosomal subunit protein bL9 (148 aa).

The protein belongs to the bacterial ribosomal protein bL9 family.

In terms of biological role, binds to the 23S rRNA. This is Large ribosomal subunit protein bL9 from Lysinibacillus sphaericus (strain C3-41).